A 190-amino-acid chain; its full sequence is Peptide deformylase (190 aa).

Fe cation is bound by residues C94 and H136. The active site involves E137. H140 contributes to the Fe cation binding site.

This sequence belongs to the polypeptide deformylase family. Requires Fe(2+) as cofactor.

The enzyme catalyses N-terminal N-formyl-L-methionyl-[peptide] + H2O = N-terminal L-methionyl-[peptide] + formate. In terms of biological role, removes the formyl group from the N-terminal Met of newly synthesized proteins. Requires at least a dipeptide for an efficient rate of reaction. N-terminal L-methionine is a prerequisite for activity but the enzyme has broad specificity at other positions. In Chlorobium luteolum (strain DSM 273 / BCRC 81028 / 2530) (Pelodictyon luteolum), this protein is Peptide deformylase.